The sequence spans 445 residues: Phosphoglucosamine mutase (445 aa).

The active-site Phosphoserine intermediate is Ser-102. The Mg(2+) site is built by Ser-102, Asp-241, Asp-243, and Asp-245. At Ser-102 the chain carries Phosphoserine.

This sequence belongs to the phosphohexose mutase family. The cofactor is Mg(2+). Activated by phosphorylation.

The catalysed reaction is alpha-D-glucosamine 1-phosphate = D-glucosamine 6-phosphate. Its function is as follows. Catalyzes the conversion of glucosamine-6-phosphate to glucosamine-1-phosphate. The protein is Phosphoglucosamine mutase of Pectobacterium atrosepticum (strain SCRI 1043 / ATCC BAA-672) (Erwinia carotovora subsp. atroseptica).